The sequence spans 371 residues: Opine oxidase subunit B (371 aa).

Heterodimer of a subunit A and a subunit B.

The protein operates within opine metabolism; octopine degradation. In terms of biological role, oxidative cleavage of octopine into L-arginine and pyruvate. The chain is Opine oxidase subunit B (ooxB) from Agrobacterium tumefaciens (strain Ach5).